The chain runs to 393 residues: NAD(P)H-quinone oxidoreductase subunit H, chloroplastic (393 aa).

Belongs to the complex I 49 kDa subunit family. NDH is composed of at least 16 different subunits, 5 of which are encoded in the nucleus.

It is found in the plastid. The protein localises to the chloroplast thylakoid membrane. The enzyme catalyses a plastoquinone + NADH + (n+1) H(+)(in) = a plastoquinol + NAD(+) + n H(+)(out). The catalysed reaction is a plastoquinone + NADPH + (n+1) H(+)(in) = a plastoquinol + NADP(+) + n H(+)(out). Functionally, NDH shuttles electrons from NAD(P)H:plastoquinone, via FMN and iron-sulfur (Fe-S) centers, to quinones in the photosynthetic chain and possibly in a chloroplast respiratory chain. The immediate electron acceptor for the enzyme in this species is believed to be plastoquinone. Couples the redox reaction to proton translocation, and thus conserves the redox energy in a proton gradient. The chain is NAD(P)H-quinone oxidoreductase subunit H, chloroplastic from Solanum tuberosum (Potato).